The primary structure comprises 305 residues: Fructose-bisphosphate aldolase (305 aa).

Residue S49 coordinates D-glyceraldehyde 3-phosphate. The Proton donor role is filled by D80. Positions 81, 102, 132, and 178 each coordinate Zn(2+). Residue G179 coordinates dihydroxyacetone phosphate. H208 contacts Zn(2+). Dihydroxyacetone phosphate-binding positions include 209–211 and 251–254; these read GAS and NTDT.

Belongs to the class II fructose-bisphosphate aldolase family. As to quaternary structure, homotetramer. It depends on Zn(2+) as a cofactor.

The catalysed reaction is beta-D-fructose 1,6-bisphosphate = D-glyceraldehyde 3-phosphate + dihydroxyacetone phosphate. It participates in carbohydrate degradation; glycolysis; D-glyceraldehyde 3-phosphate and glycerone phosphate from D-glucose: step 4/4. In terms of biological role, catalyzes the aldol condensation of dihydroxyacetone phosphate (DHAP or glycerone-phosphate) with glyceraldehyde 3-phosphate (G3P) to form fructose 1,6-bisphosphate (FBP) in gluconeogenesis and the reverse reaction in glycolysis. The polypeptide is Fructose-bisphosphate aldolase (Thermus caldophilus).